The following is a 240-amino-acid chain: Thiopurine S-methyltransferase (240 aa).

Position 24-35 (24-35) interacts with S-adenosyl-L-methionine; that stretch reads WQDKWVTRHIAF. Phenylalanine 35 serves as a coordination point for substrate. An N6-acetyllysine modification is found at lysine 53. Residues leucine 64, glutamate 85, 129 to 130, and arginine 147 each bind S-adenosyl-L-methionine; that span reads SI.

Belongs to the class I-like SAM-binding methyltransferase superfamily. TPMT family. In terms of assembly, monomer.

It localises to the cytoplasm. The catalysed reaction is S-adenosyl-L-methionine + a thiopurine = S-adenosyl-L-homocysteine + a thiopurine S-methylether.. The enzyme catalyses mercaptopurine + S-adenosyl-L-methionine = 6-methylthiopurine + S-adenosyl-L-homocysteine + H(+). Catalyzes the S-methylation of thiopurine drugs such as 6-mercaptopurine (also called mercaptopurine, 6-MP or its brand name Purinethol) using S-adenosyl-L-methionine as the methyl donor. TPMT activity modulates the cytotoxic effects of thiopurine prodrugs. A natural substrate for this enzyme has yet to be identified. This Rattus norvegicus (Rat) protein is Thiopurine S-methyltransferase (Tpmt).